A 295-amino-acid chain; its full sequence is Ribosomal RNA small subunit methyltransferase H (295 aa).

S-adenosyl-L-methionine is bound by residues 36 to 38, D56, L90, D104, and H111; that span reads GGH.

This sequence belongs to the methyltransferase superfamily. RsmH family.

It localises to the cytoplasm. The catalysed reaction is cytidine(1402) in 16S rRNA + S-adenosyl-L-methionine = N(4)-methylcytidine(1402) in 16S rRNA + S-adenosyl-L-homocysteine + H(+). Functionally, specifically methylates the N4 position of cytidine in position 1402 (C1402) of 16S rRNA. In Dictyoglomus turgidum (strain DSM 6724 / Z-1310), this protein is Ribosomal RNA small subunit methyltransferase H.